The sequence spans 340 residues: Cytochrome c oxidase subunit 1 (340 aa).

Residues 18-38 (MCYLLVAILCGFLGYIYSLFI) form a helical membrane-spanning segment. The Ca(2+) site is built by glutamate 41 and glycine 46. The chain crosses the membrane as a helical span at residues 42 to 62 (LSIIGCGVLFGDYQYYNVLVT). Residue histidine 64 participates in Fe(II)-heme a binding. 7 consecutive transmembrane segments (helical) span residues 66 to 86 (LVMVFAFIMPVMMGGLVNYFV), 100 to 120 (LNNMSFWMFMGGFGALVSGLL), 148 to 168 (FTVFAVHLLGVSSILNSINLL), 186 to 206 (LFIWGSLITALLLIITLPVLA), 237 to 257 (LFWFFGHPEVYIIIIPVFGLI), 279 to 299 (MILIAILGFFVWAHHMFVVGM), and 305 to 325 (AYFGSVTVLIGLPTCIKLFNW). Histidine 243 contributes to the Cu cation binding site. A cross-link (1'-histidyl-3'-tyrosine (His-Tyr)) is located at residues 243–247 (HPEVY). An O2-binding site is contributed by tyrosine 247. 2 residues coordinate Cu cation: histidine 292 and histidine 293.

This sequence belongs to the heme-copper respiratory oxidase family. As to quaternary structure, component of the cytochrome c oxidase (complex IV, CIV), a multisubunit enzyme composed of a catalytic core of 3 subunits and several supernumerary subunits. The complex exists as a monomer or a dimer and forms supercomplexes (SCs) in the inner mitochondrial membrane with ubiquinol-cytochrome c oxidoreductase (cytochrome b-c1 complex, complex III, CIII). Requires heme as cofactor. Cu cation is required as a cofactor.

It localises to the mitochondrion inner membrane. It carries out the reaction 4 Fe(II)-[cytochrome c] + O2 + 8 H(+)(in) = 4 Fe(III)-[cytochrome c] + 2 H2O + 4 H(+)(out). The protein operates within energy metabolism; oxidative phosphorylation. Functionally, component of the cytochrome c oxidase, the last enzyme in the mitochondrial electron transport chain which drives oxidative phosphorylation. The respiratory chain contains 3 multisubunit complexes succinate dehydrogenase (complex II, CII), ubiquinol-cytochrome c oxidoreductase (cytochrome b-c1 complex, complex III, CIII) and cytochrome c oxidase (complex IV, CIV), that cooperate to transfer electrons derived from NADH and succinate to molecular oxygen, creating an electrochemical gradient over the inner membrane that drives transmembrane transport and the ATP synthase. Cytochrome c oxidase is the component of the respiratory chain that catalyzes the reduction of oxygen to water. Electrons originating from reduced cytochrome c in the intermembrane space (IMS) are transferred via the dinuclear copper A center (CU(A)) of subunit 2 and heme A of subunit 1 to the active site in subunit 1, a binuclear center (BNC) formed by heme A3 and copper B (CU(B)). The BNC reduces molecular oxygen to 2 water molecules using 4 electrons from cytochrome c in the IMS and 4 protons from the mitochondrial matrix. This Strigomonas oncopelti (Parasitic flagellate) protein is Cytochrome c oxidase subunit 1 (COI).